The chain runs to 187 residues: Elongation factor P (187 aa).

The protein belongs to the elongation factor P family.

It localises to the cytoplasm. Its pathway is protein biosynthesis; polypeptide chain elongation. Its function is as follows. Involved in peptide bond synthesis. Stimulates efficient translation and peptide-bond synthesis on native or reconstituted 70S ribosomes in vitro. Probably functions indirectly by altering the affinity of the ribosome for aminoacyl-tRNA, thus increasing their reactivity as acceptors for peptidyl transferase. This chain is Elongation factor P, found in Desulfotalea psychrophila (strain LSv54 / DSM 12343).